Here is a 445-residue protein sequence, read N- to C-terminus: Glycine--tRNA ligase (445 aa).

The substrate site is built by arginine 97 and glutamate 145. ATP is bound by residues 177-179 (RNE), 187-192 (FRTCEF), 262-263 (EV), and 308-311 (GLTR). Residue 192 to 196 (FEQME) participates in substrate binding. 304-308 (ETSAG) contacts substrate.

It belongs to the class-II aminoacyl-tRNA synthetase family. Homodimer.

The protein resides in the cytoplasm. It catalyses the reaction tRNA(Gly) + glycine + ATP = glycyl-tRNA(Gly) + AMP + diphosphate. Its function is as follows. Catalyzes the attachment of glycine to tRNA(Gly). The sequence is that of Glycine--tRNA ligase from Borreliella burgdorferi (strain ATCC 35210 / DSM 4680 / CIP 102532 / B31) (Borrelia burgdorferi).